A 308-amino-acid polypeptide reads, in one-letter code: Porphobilinogen deaminase (308 aa).

Residue Cys241 is modified to S-(dipyrrolylmethanemethyl)cysteine.

Belongs to the HMBS family. As to quaternary structure, monomer. Requires dipyrromethane as cofactor.

The catalysed reaction is 4 porphobilinogen + H2O = hydroxymethylbilane + 4 NH4(+). Its pathway is porphyrin-containing compound metabolism; protoporphyrin-IX biosynthesis; coproporphyrinogen-III from 5-aminolevulinate: step 2/4. Its function is as follows. Tetrapolymerization of the monopyrrole PBG into the hydroxymethylbilane pre-uroporphyrinogen in several discrete steps. The polypeptide is Porphobilinogen deaminase (Staphylococcus carnosus (strain TM300)).